The following is a 65-amino-acid chain: Sarcoplasmic/endoplasmic reticulum calcium ATPase regulator ARLN (65 aa).

Position 1 is an N-acetylmethionine (methionine 1). The disordered stretch occupies residues 1–36 (MEVSQAASGTDGVRERRGSFEAGRRNQDEAPQSGMN). Over residues 12-28 (GVRERRGSFEAGRRNQD) the composition is skewed to basic and acidic residues. Serine 19 is subject to Phosphoserine. Residues 44 to 64 (WLDLWLFILFDLALFVFVYLL) form a helical membrane-spanning segment.

In terms of assembly, homooligomer. Can also form heterooligomers with other sarcoplasmic/endoplasmic reticulum calcium ATPase (SERCA) regulators ERLN, PLN, SLN and STRIT1/DWORF. Monomer. Interacts as a monomer with ATP2A2/SERCA2; the interaction results in inhibition of ATP2A2 Ca(2+) affinity. In the embryo, expressed in heart, epidermal epithelium, salivary gland, brown fat, intestinal epithelium and bladder urothelium.

It is found in the endoplasmic reticulum membrane. Its function is as follows. Inhibits the activity of the calcium ATPases ATP2A2/SERCA2 and ATP2A3/SERCA3 by decreasing their apparent affinity for Ca(2+). This Mus musculus (Mouse) protein is Sarcoplasmic/endoplasmic reticulum calcium ATPase regulator ARLN (Arln).